The chain runs to 64 residues: Large ribosomal subunit protein bL35 (64 aa).

The protein belongs to the bacterial ribosomal protein bL35 family.

This Desulforudis audaxviator (strain MP104C) protein is Large ribosomal subunit protein bL35.